Here is a 91-residue protein sequence, read N- to C-terminus: uncharacterized protein (91 aa).

The next 3 membrane-spanning stretches (helical) occupy residues 4–21 (YAII…LRRG), 28–50 (IIEV…SHAV), and 60–82 (VKAF…GTYL).

The protein localises to the cell membrane. This is an uncharacterized protein from Archaeoglobus fulgidus (strain ATCC 49558 / DSM 4304 / JCM 9628 / NBRC 100126 / VC-16).